The chain runs to 139 residues: Putative pre-16S rRNA nuclease (139 aa).

Belongs to the YqgF nuclease family.

The protein resides in the cytoplasm. In terms of biological role, could be a nuclease involved in processing of the 5'-end of pre-16S rRNA. This is Putative pre-16S rRNA nuclease from Streptococcus uberis (strain ATCC BAA-854 / 0140J).